The primary structure comprises 206 residues: Small ribosomal subunit protein uS4 (206 aa).

An S4 RNA-binding domain is found at 96 to 156 (TRLDNVVYRM…EKSKTQARII (61 aa)).

It belongs to the universal ribosomal protein uS4 family. In terms of assembly, part of the 30S ribosomal subunit. Contacts protein S5. The interaction surface between S4 and S5 is involved in control of translational fidelity.

In terms of biological role, one of the primary rRNA binding proteins, it binds directly to 16S rRNA where it nucleates assembly of the body of the 30S subunit. Its function is as follows. With S5 and S12 plays an important role in translational accuracy. This is Small ribosomal subunit protein uS4 from Colwellia psychrerythraea (strain 34H / ATCC BAA-681) (Vibrio psychroerythus).